Consider the following 660-residue polypeptide: Bifunctional polymyxin resistance protein ArnA (660 aa).

The interval 1-304 (MKTVVFAYHD…TLGLVQGSRL (304 aa)) is formyltransferase ArnAFT. 86 to 88 (HLI) contributes to the (6R)-10-formyltetrahydrofolate binding site. The Proton donor; for formyltransferase activity role is filled by His104. (6R)-10-formyltetrahydrofolate contacts are provided by residues Arg114 and 136–140 (VKRAD). A dehydrogenase ArnADH region spans residues 314–660 (RRTRVLILGV…RTVDLTDKPS (347 aa)). NAD(+) is bound by residues Asp347 and 368-369 (DI). UDP-alpha-D-glucuronate contacts are provided by residues Ala393, Tyr398, and 432–433 (TS). Glu434 acts as the Proton acceptor; for decarboxylase activity in catalysis. UDP-alpha-D-glucuronate is bound by residues Arg460, Asn492, 526–535 (KLIDGGKQKR), and Tyr613. Catalysis depends on Arg619, which acts as the Proton donor; for decarboxylase activity.

It in the N-terminal section; belongs to the Fmt family. UDP-L-Ara4N formyltransferase subfamily. In the C-terminal section; belongs to the NAD(P)-dependent epimerase/dehydratase family. UDP-glucuronic acid decarboxylase subfamily. In terms of assembly, homohexamer, formed by a dimer of trimers.

The enzyme catalyses UDP-alpha-D-glucuronate + NAD(+) = UDP-beta-L-threo-pentopyranos-4-ulose + CO2 + NADH. It carries out the reaction UDP-4-amino-4-deoxy-beta-L-arabinose + (6R)-10-formyltetrahydrofolate = UDP-4-deoxy-4-formamido-beta-L-arabinose + (6S)-5,6,7,8-tetrahydrofolate + H(+). It participates in nucleotide-sugar biosynthesis; UDP-4-deoxy-4-formamido-beta-L-arabinose biosynthesis; UDP-4-deoxy-4-formamido-beta-L-arabinose from UDP-alpha-D-glucuronate: step 1/3. The protein operates within nucleotide-sugar biosynthesis; UDP-4-deoxy-4-formamido-beta-L-arabinose biosynthesis; UDP-4-deoxy-4-formamido-beta-L-arabinose from UDP-alpha-D-glucuronate: step 3/3. Its pathway is bacterial outer membrane biogenesis; lipopolysaccharide biosynthesis. In terms of biological role, bifunctional enzyme that catalyzes the oxidative decarboxylation of UDP-glucuronic acid (UDP-GlcUA) to UDP-4-keto-arabinose (UDP-Ara4O) and the addition of a formyl group to UDP-4-amino-4-deoxy-L-arabinose (UDP-L-Ara4N) to form UDP-L-4-formamido-arabinose (UDP-L-Ara4FN). The modified arabinose is attached to lipid A and is required for resistance to polymyxin and cationic antimicrobial peptides. The chain is Bifunctional polymyxin resistance protein ArnA from Escherichia coli O157:H7.